Here is a 257-residue protein sequence, read N- to C-terminus: 5'-nucleotidase SurE (257 aa).

Asp9, Asp10, Ser42, and Asn96 together coordinate a divalent metal cation.

It belongs to the SurE nucleotidase family. A divalent metal cation is required as a cofactor.

It is found in the cytoplasm. It catalyses the reaction a ribonucleoside 5'-phosphate + H2O = a ribonucleoside + phosphate. Nucleotidase that shows phosphatase activity on nucleoside 5'-monophosphates. This chain is 5'-nucleotidase SurE, found in Campylobacter lari (strain RM2100 / D67 / ATCC BAA-1060).